Consider the following 413-residue polypeptide: BSD domain-containing protein 1-A (413 aa).

Positions 146–198 constitute a BSD domain; it reads WLAYWDPEQRKAEISELLVTSPSIRALFTKMVPAAVSHSEFWQRYFYKVHQLE. 2 stretches are compositionally biased toward basic and acidic residues: residues 208-219 and 255-271; these read KQRADQSVHSEE and HVEDKSEKTAELNRDHT. Disordered stretches follow at residues 208–228 and 255–386; these read KQRADQSVHSEEPTWEEEEED and HVED…EFDM. Over residues 274-287 the composition is skewed to low complexity; that stretch reads TSPSESSESISPIT. A compositionally biased stretch (polar residues) spans 297–322; sequence QTPSKEPSPGTLTVTKENTGAGTDET. Positions 342-352 are enriched in basic and acidic residues; sequence QREDPPSDLRV. Residues 356–375 show a composition bias toward polar residues; that stretch reads NSDSGKSTPSNNGQKGSSTD. The segment covering 376-386 has biased composition (acidic residues); the sequence is ISEDWEKEFDM.

This is BSD domain-containing protein 1-A (bsdc1-a) from Xenopus laevis (African clawed frog).